A 359-amino-acid chain; its full sequence is 3-dehydroquinate synthase (359 aa).

Residues 71–76 (DGEQYK), 105–109 (GVIGD), 129–130 (TT), lysine 142, lysine 151, and 169–172 (CLST) contribute to the NAD(+) site. The Zn(2+) site is built by glutamate 184, histidine 247, and histidine 264.

Belongs to the sugar phosphate cyclases superfamily. Dehydroquinate synthase family. The cofactor is Co(2+). It depends on Zn(2+) as a cofactor. NAD(+) is required as a cofactor.

The protein resides in the cytoplasm. The catalysed reaction is 7-phospho-2-dehydro-3-deoxy-D-arabino-heptonate = 3-dehydroquinate + phosphate. It functions in the pathway metabolic intermediate biosynthesis; chorismate biosynthesis; chorismate from D-erythrose 4-phosphate and phosphoenolpyruvate: step 2/7. In terms of biological role, catalyzes the conversion of 3-deoxy-D-arabino-heptulosonate 7-phosphate (DAHP) to dehydroquinate (DHQ). The protein is 3-dehydroquinate synthase of Shewanella piezotolerans (strain WP3 / JCM 13877).